We begin with the raw amino-acid sequence, 98 residues long: Serine rich endogenous peptide 10 (98 aa).

A signal peptide spans methionine 1–serine 29. The segment at asparagine 50–proline 98 is disordered. Positions alanine 52–aspartate 61 are enriched in polar residues. Short sequence motifs (SCOOP motif) lie at residues alanine 52–serine 66 and aspartate 80–arginine 94. 2 short sequence motifs (sxS motif essential for MIK2 binding) span residues serine 58–serine 60 and serine 86–serine 88. A compositionally biased stretch (gly residues) spans serine 86–proline 98.

The protein belongs to the serine rich endogenous peptide (SCOOP) phytocytokine family. In terms of assembly, interacts with MIK2 (via extracellular leucine-rich repeat domain); this interaction triggers the formation of complex between MIK2 and the BAK1/SERK3 and SERK4 coreceptors, and subsequent BAK1 activation by phosphorylation. As to expression, mostly expressed in leaves and seedlings shoots, to a lower extent, in roots, but barely in flowers.

Its subcellular location is the cell membrane. The protein localises to the secreted. It is found in the extracellular space. The protein resides in the apoplast. Brassicaceae-specific phytocytokine (plant endogenous peptide released into the apoplast) perceived by MIK2 in a BAK1/SERK3 and SERK4 coreceptors-dependent manner, that modulates various physiological and antimicrobial processes including growth prevention and reactive oxygen species (ROS) response regulation. Inhibits root growth and regulates root meristems. Promotes ROS production and MAPK (e.g. MPK3, MPK4 and MPK6) activation in a MIK2-dependent manner, thus leading to the up-regulation of immune-related marker genes (e.g. WRKY30, WRKY33 and CYP81F2). This chain is Serine rich endogenous peptide 10, found in Arabidopsis thaliana (Mouse-ear cress).